The chain runs to 213 residues: Orotate phosphoribosyltransferase (213 aa).

Lys26 serves as a coordination point for 5-phospho-alpha-D-ribose 1-diphosphate. 34-35 is an orotate binding site; the sequence is FF. 5-phospho-alpha-D-ribose 1-diphosphate-binding positions include 72–73, Arg99, Lys100, Lys103, His105, and 124–132; these read YK and DDVITAGTA. The orotate site is built by Thr128 and Arg156.

Belongs to the purine/pyrimidine phosphoribosyltransferase family. PyrE subfamily. As to quaternary structure, homodimer. Mg(2+) serves as cofactor.

The enzyme catalyses orotidine 5'-phosphate + diphosphate = orotate + 5-phospho-alpha-D-ribose 1-diphosphate. The protein operates within pyrimidine metabolism; UMP biosynthesis via de novo pathway; UMP from orotate: step 1/2. Catalyzes the transfer of a ribosyl phosphate group from 5-phosphoribose 1-diphosphate to orotate, leading to the formation of orotidine monophosphate (OMP). In Salmonella arizonae (strain ATCC BAA-731 / CDC346-86 / RSK2980), this protein is Orotate phosphoribosyltransferase.